The primary structure comprises 398 residues: Na(+)/H(+) antiporter NhaA (398 aa).

12 helical membrane passes run 8 to 28, 59 to 79, 96 to 116, 124 to 144, 154 to 174, 177 to 197, 202 to 222, 223 to 243, 261 to 281, 292 to 312, 328 to 348, and 362 to 382; these read FLQL…LALI, LLLW…GMEI, LPVI…SFII, AGWA…LSLL, VFLL…IALF, AELH…LLML, VMLL…VLKS, GVHA…IRGA, YFIL…GLSW, IIVG…WLAV, LFGL…IGGL, and LGIL…LRNA.

It belongs to the NhaA Na(+)/H(+) (TC 2.A.33) antiporter family.

The protein localises to the cell inner membrane. It carries out the reaction Na(+)(in) + 2 H(+)(out) = Na(+)(out) + 2 H(+)(in). In terms of biological role, na(+)/H(+) antiporter that extrudes sodium in exchange for external protons. This chain is Na(+)/H(+) antiporter NhaA, found in Tolumonas auensis (strain DSM 9187 / NBRC 110442 / TA 4).